The sequence spans 337 residues: Nucleoid-associated protein PBPRA2585 (337 aa).

This sequence belongs to the YejK family.

The protein resides in the cytoplasm. The protein localises to the nucleoid. The chain is Nucleoid-associated protein PBPRA2585 from Photobacterium profundum (strain SS9).